An 836-amino-acid chain; its full sequence is Pentatricopeptide repeat-containing protein At2g39620 (836 aa).

23 PPR repeats span residues 1–35 (MPINYTNLLLMLRECKNFRCLLQVHGSLIVSGLKP), 36–62 (HNQLINAYSLFQRQDLSRVIFDSVRDP), 63–98 (GVVLWNSMIRGYTRAGLHREALGFFGYMSEEKGIDP), 99–133 (DKYSFTFALKACAGSMDFKKGLRIHDLIAEMGLES), 134–164 (DVYIGTALVEMYCKARDLVSARQVFDKMHVK), 165–199 (DVVTWNTMVSGLAQNGCSSAALLLFHDMRSCCVDI), 200–230 (DHVSLYNLIPAVSKLEKSDVCRCLHGLVIKK), 233–263 (IFAFSSGLIDMYCNCADLYAAESVFEEVWRK), 264–298 (DESSWGTMMAAYAHNGFFEEVLELFDLMRNYDVRM), 299–333 (NKVAAASALQAAAYVGDLVKGIAIHDYAVQQGLIG), 334–364 (DVSVATSLMSMYSKCGELEIAEQLFINIEDR), 365–399 (DVVSWSAMIASYEQAGQHDEAISLFRDMMRIHIKP), 400–434 (NAVTLTSVLQGCAGVAASRLGKSIHCYAIKADIES), 435–465 (ELETATAVISMYAKCGRFSPALKAFERLPIK), 466–500 (DAVAFNALAQGYTQIGDANKAFDVYKNMKLHGVCP), 501–535 (DSRTMVGMLQTCAFCSDYARGSCVYGQIIKHGFDS), 536–566 (ECHVAHALINMFTKCDALAAAIVLFDKCGFE), 568–602 (STVSWNIMMNGYLLHGQAEEAVATFRQMKVEKFQP), 603–637 (NAVTFVNIVRAAAELSALRVGMSVHSSLIQCGFCS), 638–668 (QTPVGNSLVDMYAKCGMIESSEKCFIEISNK), 669–703 (YIVSWNTMLSAYAAHGLASCAVSLFLSMQENELKP), 704–734 (DSVSFLSVLSACRHAGLVEEGKRIFEEMGER), and 740–770 (EVEHYACMVDLLGKAGLFGEAVEMMRRMRVK). The type E motif; degenerate stretch occupies residues 775 to 836 (VWGALLNSSR…KVPACSWIEV (62 aa)).

This sequence belongs to the PPR family. PCMP-E subfamily.

This is Pentatricopeptide repeat-containing protein At2g39620 (PCMP-E33) from Arabidopsis thaliana (Mouse-ear cress).